The chain runs to 82 residues: Large ribosomal subunit protein uL23 (82 aa).

Belongs to the universal ribosomal protein uL23 family. In terms of assembly, part of the 50S ribosomal subunit. Contacts protein L29.

Binds to 23S rRNA. One of the proteins that surrounds the polypeptide exit tunnel on the outside of the ribosome. This Methanococcoides burtonii (strain DSM 6242 / NBRC 107633 / OCM 468 / ACE-M) protein is Large ribosomal subunit protein uL23.